The following is a 346-amino-acid chain: 4-hydroxy-3-methylbut-2-enyl diphosphate reductase (346 aa).

C19 serves as a coordination point for [4Fe-4S] cluster. Residues H48 and H84 each contribute to the (2E)-4-hydroxy-3-methylbut-2-enyl diphosphate site. Dimethylallyl diphosphate-binding residues include H48 and H84. H48 and H84 together coordinate isopentenyl diphosphate. A [4Fe-4S] cluster-binding site is contributed by C106. Residue H134 coordinates (2E)-4-hydroxy-3-methylbut-2-enyl diphosphate. H134 serves as a coordination point for dimethylallyl diphosphate. H134 provides a ligand contact to isopentenyl diphosphate. E136 (proton donor) is an active-site residue. T175 contributes to the (2E)-4-hydroxy-3-methylbut-2-enyl diphosphate binding site. C205 is a [4Fe-4S] cluster binding site. (2E)-4-hydroxy-3-methylbut-2-enyl diphosphate-binding residues include S233, S234, N235, and S278. Positions 233, 234, 235, and 278 each coordinate dimethylallyl diphosphate. Positions 233, 234, 235, and 278 each coordinate isopentenyl diphosphate.

The protein belongs to the IspH family. The cofactor is [4Fe-4S] cluster.

It catalyses the reaction isopentenyl diphosphate + 2 oxidized [2Fe-2S]-[ferredoxin] + H2O = (2E)-4-hydroxy-3-methylbut-2-enyl diphosphate + 2 reduced [2Fe-2S]-[ferredoxin] + 2 H(+). The catalysed reaction is dimethylallyl diphosphate + 2 oxidized [2Fe-2S]-[ferredoxin] + H2O = (2E)-4-hydroxy-3-methylbut-2-enyl diphosphate + 2 reduced [2Fe-2S]-[ferredoxin] + 2 H(+). It participates in isoprenoid biosynthesis; dimethylallyl diphosphate biosynthesis; dimethylallyl diphosphate from (2E)-4-hydroxy-3-methylbutenyl diphosphate: step 1/1. It functions in the pathway isoprenoid biosynthesis; isopentenyl diphosphate biosynthesis via DXP pathway; isopentenyl diphosphate from 1-deoxy-D-xylulose 5-phosphate: step 6/6. Catalyzes the conversion of 1-hydroxy-2-methyl-2-(E)-butenyl 4-diphosphate (HMBPP) into a mixture of isopentenyl diphosphate (IPP) and dimethylallyl diphosphate (DMAPP). Acts in the terminal step of the DOXP/MEP pathway for isoprenoid precursor biosynthesis. This chain is 4-hydroxy-3-methylbut-2-enyl diphosphate reductase, found in Brucella suis biovar 1 (strain 1330).